The chain runs to 156 residues: Arginine repressor (156 aa).

The protein belongs to the ArgR family.

It is found in the cytoplasm. Its pathway is amino-acid biosynthesis; L-arginine biosynthesis [regulation]. Its function is as follows. Regulates arginine biosynthesis genes. In Shewanella putrefaciens (strain CN-32 / ATCC BAA-453), this protein is Arginine repressor.